Here is a 447-residue protein sequence, read N- to C-terminus: N-succinylarginine dihydrolase (447 aa).

Substrate is bound by residues 19-28 (AGLSFGNEAS), N110, and 137-138 (HR). E174 is a catalytic residue. R212 is a substrate binding site. H248 is an active-site residue. The substrate site is built by D250 and N359. C365 (nucleophile) is an active-site residue.

Belongs to the succinylarginine dihydrolase family. Homodimer.

The enzyme catalyses N(2)-succinyl-L-arginine + 2 H2O + 2 H(+) = N(2)-succinyl-L-ornithine + 2 NH4(+) + CO2. It functions in the pathway amino-acid degradation; L-arginine degradation via AST pathway; L-glutamate and succinate from L-arginine: step 2/5. Functionally, catalyzes the hydrolysis of N(2)-succinylarginine into N(2)-succinylornithine, ammonia and CO(2). This is N-succinylarginine dihydrolase from Salmonella heidelberg (strain SL476).